The chain runs to 273 residues: MASPQDNTPSGATPKPQTHEETPDQVKLRINGGERLNIRKNNPAETGFDPATSKWVNYFKVLTGSMTKEGQFHYREHLYRTNEERDLRRCEEQRDWLFRYSPVVRYMRDQIRLLGGELDADNVVCRRCPSRLTADGRILGQAGGFSPQHGILVCANSIRDRKHLEDTLAHEMVHAYDHLRWQVDFVGEKDLRHAACTEIRASMLSGECRWTREAFGRGNWTVTQQFQNCVRSRAIMSVRARARCRDTEHATKVVNQVWDSCFSDTRPFDEIYK.

Polar residues predominate over residues 1–11 (MASPQDNTPSG). The tract at residues 1-33 (MASPQDNTPSGATPKPQTHEETPDQVKLRINGG) is disordered. The span at 17–27 (QTHEETPDQVK) shows a compositional bias: basic and acidic residues. Histidine 170 is a binding site for a divalent metal cation. The active site involves glutamate 171. Histidine 174 lines the a divalent metal cation pocket.

This sequence belongs to the peptidase M76 family.

It is found in the mitochondrion inner membrane. In terms of biological role, has a dual role in the assembly of mitochondrial ATPase. Acts as a protease that removes N-terminal residues of mitochondrial ATPase CF(0) subunit 6 at the intermembrane space side. Also involved in the correct assembly of the membrane-embedded ATPase CF(0) particle, probably mediating association of subunit 6 with the subunit 9 ring. The polypeptide is Mitochondrial inner membrane protease ATP23 (ATP23) (Pyricularia oryzae (strain 70-15 / ATCC MYA-4617 / FGSC 8958) (Rice blast fungus)).